Consider the following 146-residue polypeptide: D-aminoacyl-tRNA deacylase (146 aa).

The Gly-cisPro motif, important for rejection of L-amino acids motif lies at 137 to 138 (GP).

Belongs to the DTD family. Homodimer.

The protein resides in the cytoplasm. It catalyses the reaction glycyl-tRNA(Ala) + H2O = tRNA(Ala) + glycine + H(+). It carries out the reaction a D-aminoacyl-tRNA + H2O = a tRNA + a D-alpha-amino acid + H(+). In terms of biological role, an aminoacyl-tRNA editing enzyme that deacylates mischarged D-aminoacyl-tRNAs. Also deacylates mischarged glycyl-tRNA(Ala), protecting cells against glycine mischarging by AlaRS. Acts via tRNA-based rather than protein-based catalysis; rejects L-amino acids rather than detecting D-amino acids in the active site. By recycling D-aminoacyl-tRNA to D-amino acids and free tRNA molecules, this enzyme counteracts the toxicity associated with the formation of D-aminoacyl-tRNA entities in vivo and helps enforce protein L-homochirality. The sequence is that of D-aminoacyl-tRNA deacylase from Deinococcus deserti (strain DSM 17065 / CIP 109153 / LMG 22923 / VCD115).